The following is a 131-amino-acid chain: Leptin receptor overlapping transcript-like 1 (131 aa).

A run of 4 helical transmembrane segments spans residues 7-27 (LISL…GCAL), 32-52 (QYWP…YCIA), 69-89 (LAIF…VVFA), and 100-120 (ALVL…FLVF).

This sequence belongs to the OB-RGRP/VPS55 family. As to quaternary structure, interacts with RAB13.

Its subcellular location is the membrane. In terms of biological role, negatively regulates growth hormone (GH) receptor cell surface expression in liver. May play a role in liver resistance to GH during periods of reduced nutrient availability. The protein is Leptin receptor overlapping transcript-like 1 (Leprotl1) of Mus musculus (Mouse).